The sequence spans 79 residues: Small ribosomal subunit protein bS21 (79 aa).

The disordered stretch occupies residues Ala58 to Arg79.

It belongs to the bacterial ribosomal protein bS21 family.

The chain is Small ribosomal subunit protein bS21 from Beijerinckia indica subsp. indica (strain ATCC 9039 / DSM 1715 / NCIMB 8712).